We begin with the raw amino-acid sequence, 225 residues long: MRFVVLTMFPEVFPGPLGVSVIGRGLANGYWSLEVIPIRRFAVNSRVDDAPYGGGPGMVMRADVLGEAFEYANSTYQIKRRIFLSPRGTKFVQNSTANLVEADNVLLICGRFEGVDQRFLNYYNVEELSVGDYVLSGGEIAAMAVIDSCVRCIPGVLGNLQSLECESFVGSSLEYDHYTRPNSWKGLSVPEVLMSGNHRKISEWRVNSAATATGRNRPDLVEEES.

Residues Gly-110 and 130–135 each bind S-adenosyl-L-methionine; that span reads VGDYVL.

It belongs to the RNA methyltransferase TrmD family. In terms of assembly, homodimer.

Its subcellular location is the cytoplasm. The enzyme catalyses guanosine(37) in tRNA + S-adenosyl-L-methionine = N(1)-methylguanosine(37) in tRNA + S-adenosyl-L-homocysteine + H(+). Functionally, specifically methylates guanosine-37 in various tRNAs. The sequence is that of tRNA (guanine-N(1)-)-methyltransferase from Neorickettsia sennetsu (strain ATCC VR-367 / Miyayama) (Ehrlichia sennetsu).